Here is a 216-residue protein sequence, read N- to C-terminus: Large ribosomal subunit protein uL24m (216 aa).

The N-terminal 9 residues, 1–9 (MRLSALLAL), are a transit peptide targeting the mitochondrion. The residue at position 24 (Ser-24) is a Phosphoserine. Residues 56–89 (LFCGDTVEILEGKDAGKQGKVVQVIRQRNWVVVG) enclose the KOW domain.

It belongs to the universal ribosomal protein uL24 family. Component of the mitochondrial large ribosomal subunit (mt-LSU). Mature mammalian 55S mitochondrial ribosomes consist of a small (28S) and a large (39S) subunit. The 28S small subunit contains a 12S ribosomal RNA (12S mt-rRNA) and 30 different proteins. The 39S large subunit contains a 16S rRNA (16S mt-rRNA), a copy of mitochondrial valine transfer RNA (mt-tRNA(Val)), which plays an integral structural role, and 52 different proteins.

It is found in the mitochondrion. This Homo sapiens (Human) protein is Large ribosomal subunit protein uL24m (MRPL24).